We begin with the raw amino-acid sequence, 1023 residues long: Sodium/potassium-transporting ATPase subunit alpha-1 (1023 aa).

Residues 1-5 constitute a propeptide that is removed on maturation; the sequence is MGKGV. The segment covering 1-11 has biased composition (basic and acidic residues); that stretch reads MGKGVGRDKYE. The interval 1-38 is disordered; the sequence is MGKGVGRDKYEPAAVSEHGDKKGKKAKKERDMDELKKE. Topologically, residues 6–87 are cytoplasmic; that stretch reads GRDKYEPAAV…NALTPPPTTP (82 aa). Lys9 is modified (N6-acetyllysine). Tyr10 is subject to Phosphotyrosine. At Ser16 the chain carries Phosphoserine; by PKC. Position 21 is an N6-acetyllysine (Lys21). Over residues 28 to 38 the composition is skewed to basic and acidic residues; the sequence is KERDMDELKKE. 2 positions are modified to phosphoserine: Ser40 and Ser47. Residues 82–84 form a phosphoinositide-3 kinase binding region; that stretch reads PPP. Residues 88 to 108 traverse the membrane as a helical segment; that stretch reads EWVKFCRQLFGGFSMLLWIGA. At 109-131 the chain is on the extracellular side; the sequence is ILCFLAYGILAATEEDFDNDNLY. A helical transmembrane segment spans residues 132-152; that stretch reads LGVVLAAVVIITGCFSYYQEA. The Cytoplasmic segment spans residues 153–288; sequence KSSKIMESFK…GGQTPIAAEI (136 aa). Residues 216-235 form a disordered region; that stretch reads SSLTGESEPQTRSPDFTNEN. Position 228 is a phosphoserine (Ser228). Position 260 is a phosphotyrosine (Tyr260). Residues 289–308 traverse the membrane as a helical segment; it reads EHFIHIITGVAVFLGVSFFI. At 309–320 the chain is on the extracellular side; that stretch reads LSLILEYTWLEA. Residues 321 to 338 form a helical membrane-spanning segment; sequence VIFLIGIIVANVPEGLLA. Over 339-772 the chain is Cytoplasmic; sequence TVTVCLTLTA…EEGRLIFDNL (434 aa). Catalysis depends on Asp376, which acts as the 4-aspartylphosphate intermediate. Residues Ser452 and Ser484 each carry the phosphoserine modification. Lys487 is an ATP binding site. A Phosphotyrosine modification is found at Tyr542. The tract at residues 596–717 is mediates interaction with SCN7A; the sequence is RAAVPDAVGK…QGAIVAVTGD (122 aa). Lys661 carries the N6-succinyllysine modification. Phosphoserine is present on residues Ser668 and Ser675. Asp717 and Asp721 together coordinate Mg(2+). The chain crosses the membrane as a helical span at residues 773 to 792; the sequence is KKSIAYTLTSNIPEITPFLI. Residues 793 to 802 are Extracellular-facing; sequence FIIANIPLPL. A helical membrane pass occupies residues 803–823; it reads GTVTILCIDLGTDMVPAISLA. Topologically, residues 824–843 are cytoplasmic; it reads YEQAESDIMKRQPRNPKTDK. The chain crosses the membrane as a helical span at residues 844-866; it reads LVNERLISMAYGQIGMIQALGGF. Residues 867–918 lie on the Extracellular side of the membrane; that stretch reads FTYFVILAENGFLPFHLLGIRVDWDDRWINDVEDSYGQQWTYEQRKIVEFTC. Residues 919-938 traverse the membrane as a helical segment; it reads HTAFFVSIVVVQWADLVICK. At 939-951 the chain is on the cytoplasmic side; it reads TRRNSVFQQGMKN. Ser943 is modified (phosphoserine; by PKA). A helical membrane pass occupies residues 952-970; it reads KILIFGLFEETALAAFLSY. Residues 971–985 lie on the Extracellular side of the membrane; it reads CPGMGVALRMYPLKP. Residues 986–1006 traverse the membrane as a helical segment; that stretch reads TWWFCAFPYSLLIFVYDEIRK. At 1007 to 1023 the chain is on the cytoplasmic side; the sequence is LIIRRRPGGWVEKETYY.

Belongs to the cation transport ATPase (P-type) (TC 3.A.3) family. Type IIC subfamily. In terms of assembly, the sodium/potassium-transporting ATPase is composed of a catalytic alpha subunit, an auxiliary non-catalytic beta subunit and an additional regulatory subunit. Interacts with regulatory subunit FXYD1. Interacts with regulatory subunit FXYD3. Interacts with SIK1. Interacts with SLC35G1 and STIM1. Interacts with CLN3; this interaction regulates the sodium/potassium-transporting ATPase complex localization at the plasma membrane. Interacts with SCN7A; activates ATP1A1 P-type sodium:potassium-exchanging transporter activity which indirectly signals to nearby neurons to regulate sodium homeostasis. Post-translationally, phosphorylation on Tyr-10 modulates pumping activity. Phosphorylation of Ser-943 by PKA modulates the response of ATP1A1 to PKC. Dephosphorylation by protein phosphatase 2A (PP2A) following increases in intracellular sodium, leading to increase catalytic activity. Expressed in endocardial endothelial cells.

Its subcellular location is the cell membrane. It localises to the basolateral cell membrane. The protein localises to the sarcolemma. It is found in the cell projection. The protein resides in the axon. Its subcellular location is the melanosome. It carries out the reaction K(+)(out) + Na(+)(in) + ATP + H2O = K(+)(in) + Na(+)(out) + ADP + phosphate + H(+). Functionally, this is the catalytic component of the active enzyme, which catalyzes the hydrolysis of ATP coupled with the exchange of sodium and potassium ions across the plasma membrane. This action creates the electrochemical gradient of sodium and potassium ions, providing the energy for active transport of various nutrients. Could also be part of an osmosensory signaling pathway that senses body-fluid sodium levels and controls salt intake behavior as well as voluntary water intake to regulate sodium homeostasis. This Oryctolagus cuniculus (Rabbit) protein is Sodium/potassium-transporting ATPase subunit alpha-1 (ATP1A1).